The following is a 468-amino-acid chain: Neurexin-1-beta (468 aa).

The first 46 residues, 1-46, serve as a signal peptide directing secretion; that stretch reads MYQRMLRCGAELGSPGGGSSGGAGGRLALLWIVPLTLSGLLGVAWG. The Extracellular segment spans residues 47–391; sequence ASSLGAHHIH…AEVIRESSST (345 aa). One can recognise a Laminin G-like domain in the interval 87–285; the sequence is YIFSKGGGQI…DANIAIVGNV (199 aa). Residues D137 and V154 each contribute to the Ca(2+) site. N184 is a glycosylation site (N-linked (GlcNAc...) asparagine). Residues 201-230 form an essential for interaction with CBLN1; modulates interaction affinity with NLGN1, NLGN2 and NLGN3; prevents interaction with DAG1/alpha-dystroglycan; modulates interaction with alpha-latrotoxin region; it reads GNNDNERLAIARQRIPYRLGRVVDEWLLDK. Ca(2+) is bound by residues I236 and N238. S346 is a glycosylation site (O-linked (Xyl...) (heparan sulfate) serine). A disordered region spans residues 350–381; it reads PSDDEDIDPCEPSSGGLANPTRVGGREPYPGS. A helical transmembrane segment spans residues 392–414; the sequence is TGMVVGIVAAAALCILILLYAMY. Residues 415–468 are Cytoplasmic-facing; that stretch reads KYRNRDEGSYHVDESRNYISNSAQSNGAVVKEKQPSSAKSANKNKKNKDKEYYV. A disordered region spans residues 435–468; it reads NSAQSNGAVVKEKQPSSAKSANKNKKNKDKEYYV. Phosphoserine occurs at positions 450, 451, and 454.

It belongs to the neurexin family. As to quaternary structure, the cytoplasmic C-terminal region binds to CASK. Binds NLGN1, NLGN2 and NLGN3, DAG1 (alpha-dystroglycan) and alpha-latrotoxin. Binding to neuroligins is calcium-dependent, and the binding preference ranks as follow: NLGN1 &gt; NLGN4 &gt;&gt; NLGN3 &gt; NLGN2. Interacts with CBLN2 and more weakly with CBLN4. Interacts with CBLN1; interaction is CBLN1 hexamer form-dependent; CBLN1-binding is calcium-independent; isoform 1b does not interact with CBLN1. Interacts with CLSTN3. N-glycosylated. In terms of processing, O-glycosylated; contains heparan sulfate. Heparan sulfate attachment is required for synapse development by mediating interactions with neuroligins. Brain.

The protein localises to the presynaptic cell membrane. Functionally, neuronal cell surface protein involved in cell recognition and cell adhesion by forming intracellular junctions through binding to neuroligins. Plays a role in formation of synaptic junctions. Functions as part of a trans-synaptic complex by binding to cerebellins and postsynaptic GRID1. This interaction helps regulate the activity of NMDA and AMPA receptors at hippocampal synapses without affecting synapse formation. NRXN1B-CBLN2-GRID1 complex transduce presynaptic signals into postsynaptic NMDAR response. The polypeptide is Neurexin-1-beta (Rattus norvegicus (Rat)).